A 607-amino-acid chain; its full sequence is Elongation factor 4 (607 aa).

Positions 11–193 (SKIRNFSIIA…QIVEKVPAPT (183 aa)) constitute a tr-type G domain. Residues 23 to 28 (DHGKST) and 140 to 143 (NKID) each bind GTP.

It belongs to the TRAFAC class translation factor GTPase superfamily. Classic translation factor GTPase family. LepA subfamily.

The protein localises to the cell membrane. The enzyme catalyses GTP + H2O = GDP + phosphate + H(+). Functionally, required for accurate and efficient protein synthesis under certain stress conditions. May act as a fidelity factor of the translation reaction, by catalyzing a one-codon backward translocation of tRNAs on improperly translocated ribosomes. Back-translocation proceeds from a post-translocation (POST) complex to a pre-translocation (PRE) complex, thus giving elongation factor G a second chance to translocate the tRNAs correctly. Binds to ribosomes in a GTP-dependent manner. The polypeptide is Elongation factor 4 (Bacillus cereus (strain ATCC 10987 / NRS 248)).